The sequence spans 168 residues: Bifunctional protein PyrR (168 aa).

The PRPP-binding signature appears at L90–T102.

The protein belongs to the purine/pyrimidine phosphoribosyltransferase family. PyrR subfamily.

The enzyme catalyses UMP + diphosphate = 5-phospho-alpha-D-ribose 1-diphosphate + uracil. In terms of biological role, regulates the transcription of the pyrimidine nucleotide (pyr) operon in response to exogenous pyrimidines. Functionally, also displays a weak uracil phosphoribosyltransferase activity which is not physiologically significant. The protein is Bifunctional protein PyrR of Pseudomonas fluorescens (strain ATCC BAA-477 / NRRL B-23932 / Pf-5).